A 176-amino-acid chain; its full sequence is Probable RNA-binding protein EIF1AD (176 aa).

The S1-like domain occupies 5-89; it reads TKKRYITNKV…VKGEIEYILD (85 aa). Residues 117–128 show a composition bias toward basic and acidic residues; that stretch reads AKRGKANDKMID. Residues 117-176 form a disordered region; that stretch reads AKRGKANDKMIDDDMLPPSESEEEDDESEDEIEDTYDEDEETDDEEFDTYNPNRMQAPSK. Positions 129–164 are enriched in acidic residues; it reads DDMLPPSESEEEDDESEDEIEDTYDEDEETDDEEFD. Positions 166 to 176 are enriched in polar residues; the sequence is YNPNRMQAPSK.

The protein belongs to the EIF1AD family.

In Caenorhabditis briggsae, this protein is Probable RNA-binding protein EIF1AD.